Reading from the N-terminus, the 524-residue chain is tRNA-2-methylthio-N(6)-dimethylallyladenosine synthase (524 aa).

Residues 1–12 (MNTHPSHPDHPA) are compositionally biased toward basic and acidic residues. The segment at 1-23 (MNTHPSHPDHPADTLPARGNREG) is disordered. Residues 27-143 (RTYEVRTFGC…LPTLLNRAEH (117 aa)) enclose the MTTase N-terminal domain. Cys36, Cys72, Cys106, Cys180, Cys184, and Cys187 together coordinate [4Fe-4S] cluster. A Radical SAM core domain is found at 166-402 (RESAYAGWVS…MALQERICEE (237 aa)). Residues 405–476 (QKFIGQTVEL…PFFLIADAGV (72 aa)) enclose the TRAM domain.

The protein belongs to the methylthiotransferase family. MiaB subfamily. As to quaternary structure, monomer. [4Fe-4S] cluster is required as a cofactor.

It localises to the cytoplasm. The catalysed reaction is N(6)-dimethylallyladenosine(37) in tRNA + (sulfur carrier)-SH + AH2 + 2 S-adenosyl-L-methionine = 2-methylsulfanyl-N(6)-dimethylallyladenosine(37) in tRNA + (sulfur carrier)-H + 5'-deoxyadenosine + L-methionine + A + S-adenosyl-L-homocysteine + 2 H(+). Its function is as follows. Catalyzes the methylthiolation of N6-(dimethylallyl)adenosine (i(6)A), leading to the formation of 2-methylthio-N6-(dimethylallyl)adenosine (ms(2)i(6)A) at position 37 in tRNAs that read codons beginning with uridine. This is tRNA-2-methylthio-N(6)-dimethylallyladenosine synthase from Corynebacterium efficiens (strain DSM 44549 / YS-314 / AJ 12310 / JCM 11189 / NBRC 100395).